The chain runs to 262 residues: F-actin-capping protein subunit alpha (262 aa).

Belongs to the F-actin-capping protein alpha subunit family. In terms of assembly, heterodimer of an alpha and a beta subunit.

F-actin-capping proteins bind in a Ca(2+)-independent manner to the fast growing ends of actin filaments (barbed end) thereby blocking the exchange of subunits at these ends. Unlike other capping proteins (such as gelsolin and severin), these proteins do not sever actin filaments. This is F-actin-capping protein subunit alpha (CAP1) from Kluyveromyces lactis (strain ATCC 8585 / CBS 2359 / DSM 70799 / NBRC 1267 / NRRL Y-1140 / WM37) (Yeast).